A 346-amino-acid chain; its full sequence is Annexin A1 (346 aa).

Alanine 2 carries the post-translational modification N-acetylalanine. Serine 5 is subject to Phosphoserine; by TRPM7. Residue glutamine 19 forms an Isoglutamyl lysine isopeptide (Gln-Lys) (interchain with K-?) linkage. Residue tyrosine 21 is modified to Phosphotyrosine; by EGFR. A phosphoserine mark is found at serine 34 and serine 37. Threonine 41 carries the post-translational modification Phosphothreonine. Annexin repeat units lie at residues 42 to 113, 114 to 185, 197 to 269, and 273 to 344; these read FNPS…ALLK, TPAQ…SLAK, DLAD…VIVK, and SQPM…ALCG. The residue at position 58 (lysine 58) is an N6-acetyllysine. The Ca(2+) site is built by glycine 59, valine 60, glutamate 62, lysine 97, leucine 100, glutamate 105, methionine 127, glycine 129, glycine 131, threonine 132, and glutamate 134. Threonine 136 bears the Phosphothreonine mark. The Ca(2+) site is built by aspartate 171, glycine 210, and arginine 213. Lysine 214 is covalently cross-linked (Glycyl lysine isopeptide (Lys-Gly) (interchain with G-Cter in SUMO1); alternate). Lysine 214 participates in a covalent cross-link: Glycyl lysine isopeptide (Lys-Gly) (interchain with G-Cter in SUMO2); alternate. Glycine 215 provides a ligand contact to Ca(2+). Lysine 239 is modified (N6-acetyllysine). Residues aspartate 253, glutamate 255, and leucine 256 each coordinate Ca(2+). Lysine 257 is covalently cross-linked (Glycyl lysine isopeptide (Lys-Gly) (interchain with G-Cter in SUMO1)). Residues glutamate 261, methionine 286, glycine 288, and glycine 290 each coordinate Ca(2+). Residue lysine 312 is modified to N6-acetyllysine. Cysteine 324 and cysteine 343 are joined by a disulfide. Residues leucine 328, glutamate 330, and threonine 331 each coordinate Ca(2+). Lysine 332 participates in a covalent cross-link: Glycyl lysine isopeptide (Lys-Gly) (interchain with G-Cter in SUMO1). A Ca(2+)-binding site is contributed by glutamate 336.

Belongs to the annexin family. Homodimer; non-covalently linked. Homodimer; linked by transglutamylation. Homodimers linked by transglutamylation are observed in placenta, but not in other tissues. Interacts with S100A11. Heterotetramer, formed by two molecules each of S100A11 and ANXA1. Interacts with DYSF. Interacts with EGFR. In terms of processing, phosphorylated by protein kinase C, EGFR and TRPM7. Phosphorylated in response to EGF treatment. Sumoylated. Post-translationally, proteolytically cleaved by cathepsin CTSG to release the active N-terminal peptide Ac2-26. As to expression, detected on surface epithelia and mucosal glands in nasal cavity, trachea, bronchi and bronchioles. Detected in blood vessel endothelial cells. Detected in neutrophils (at protein level).

The protein resides in the nucleus. It localises to the cytoplasm. Its subcellular location is the cell projection. The protein localises to the cilium. It is found in the basolateral cell membrane. The protein resides in the lateral cell membrane. It localises to the cell membrane. Its subcellular location is the apical cell membrane. The protein localises to the membrane. It is found in the endosome membrane. The protein resides in the secreted. It localises to the extracellular space. Its subcellular location is the early endosome. The protein localises to the cytoplasmic vesicle membrane. It is found in the extracellular exosome. The protein resides in the cytoplasmic vesicle. It localises to the secretory vesicle lumen. Its subcellular location is the phagocytic cup. In terms of biological role, plays important roles in the innate immune response as effector of glucocorticoid-mediated responses and regulator of the inflammatory process. Has anti-inflammatory activity. Plays a role in glucocorticoid-mediated down-regulation of the early phase of the inflammatory response. Contributes to the adaptive immune response by enhancing signaling cascades that are triggered by T-cell activation, regulates differentiation and proliferation of activated T-cells. Promotes the differentiation of T-cells into Th1 cells and negatively regulates differentiation into Th2 cells. Has no effect on unstimulated T-cells. Negatively regulates hormone exocytosis via activation of the formyl peptide receptors and reorganization of the actin cytoskeleton. Has high affinity for Ca(2+) and can bind up to eight Ca(2+) ions. Displays Ca(2+)-dependent binding to phospholipid membranes. Plays a role in the formation of phagocytic cups and phagosomes. Plays a role in phagocytosis by mediating the Ca(2+)-dependent interaction between phagosomes and the actin cytoskeleton. Functionally, functions at least in part by activating the formyl peptide receptors and downstream signaling cascades. Promotes chemotaxis of granulocytes and monocytes via activation of the formyl peptide receptors. Promotes rearrangement of the actin cytoskeleton, cell polarization and cell migration. Promotes resolution of inflammation and wound healing. Acts via neutrophil N-formyl peptide receptors to enhance the release of CXCL2. This chain is Annexin A1 (ANXA1), found in Bos taurus (Bovine).